The sequence spans 399 residues: MSSSVSSVRLPLRAAPPLYGRREWRADGARAPSPALVAVKPLSCRAPASYRSALLLHRRRRYALPPVAATATSKPVLKDPKKYQEWDSLTAKFAGAANVPFLLLQLPQIILNARNLLAGNKTALFAVPWLGMLTGLLGNLSLLSYFAKKKETGAVIVQTLGVISTYVVIAQLAMAESMPLPQFVATSAVVAAGLLLNFLNYFGWLPGTLWLLWEDFITIGGLAVLPQVMWSTFVPFIPNSLLPGIISGSLAATAVVMARMGKLSKGGINFVGSLSGWTATLLFMWMPVAQMWTNYLNPSNIKGLSAFTMLLAMIGNGLMIPRAVFIRDLMWFTGSAWASFLQGWGNLACMYCFDSISRESFLATTFGLLLWLGFTLWRDTIAHGNSSPVTSLKELLFGK.

A chloroplast-targeting transit peptide spans Met1–Val67. Transmembrane regions (helical) follow at residues Phe93–Ala113, Ala123–Leu143, Ala154–Met174, Leu180–Phe202, Ile217–Ile237, Pro238–Ala258, Ile268–Val288, Ala306–Ile326, and Phe361–Ile381.

The protein resides in the plastid. The protein localises to the chloroplast inner membrane. In terms of biological role, probable maltose transporter. Essential for the conversion of starch to sucrose in leaves at night, probably via the export of maltose from the chloroplast. This is Maltose excess protein 1-like, chloroplastic from Oryza sativa subsp. japonica (Rice).